The primary structure comprises 163 residues: Large ribosomal subunit protein uL10 (163 aa).

The protein belongs to the universal ribosomal protein uL10 family. Part of the ribosomal stalk of the 50S ribosomal subunit. The N-terminus interacts with L11 and the large rRNA to form the base of the stalk. The C-terminus forms an elongated spine to which L12 dimers bind in a sequential fashion forming a multimeric L10(L12)X complex.

Its function is as follows. Forms part of the ribosomal stalk, playing a central role in the interaction of the ribosome with GTP-bound translation factors. The protein is Large ribosomal subunit protein uL10 of Haemophilus ducreyi (strain 35000HP / ATCC 700724).